Reading from the N-terminus, the 1177-residue chain is DNA-directed RNA polymerase subunit beta (1177 aa).

Acidic residues predominate over residues 1147–1161 (DDTEIEMRDTEDDDD). The interval 1147-1177 (DDTEIEMRDTEDDDDHQSADKLNVEVETTKE) is disordered. Residues 1162 to 1177 (HQSADKLNVEVETTKE) are compositionally biased toward basic and acidic residues.

This sequence belongs to the RNA polymerase beta chain family. The RNAP catalytic core consists of 2 alpha, 1 beta, 1 beta' and 1 omega subunit. When a sigma factor is associated with the core the holoenzyme is formed, which can initiate transcription.

The enzyme catalyses RNA(n) + a ribonucleoside 5'-triphosphate = RNA(n+1) + diphosphate. Functionally, DNA-dependent RNA polymerase catalyzes the transcription of DNA into RNA using the four ribonucleoside triphosphates as substrates. This is DNA-directed RNA polymerase subunit beta from Bacillus thuringiensis (strain Al Hakam).